Here is a 445-residue protein sequence, read N- to C-terminus: Tubby-like F-box protein 10 (445 aa).

The F-box domain maps to 57–112 (SRWANLPPELLFDVIKRLEESESNWPARKHVVACASVCRSWRAMCQEIVLGPEICG). Positions 382 to 398 (PQPQGTGAAAAPTSAPA) are enriched in low complexity. A disordered region spans residues 382–401 (PQPQGTGAAAAPTSAPAHPE).

This sequence belongs to the TUB family. In terms of assembly, part of a SCF (ASK-cullin-F-box) protein ligase complex. Interacts with SKP1A/ASK1. Ubiquitous.

It is found in the nucleus. The protein operates within protein modification; protein ubiquitination. In terms of biological role, component of SCF(ASK-cullin-F-box) E3 ubiquitin ligase complexes, which may mediate the ubiquitination and subsequent proteasomal degradation of target proteins. The protein is Tubby-like F-box protein 10 of Arabidopsis thaliana (Mouse-ear cress).